The primary structure comprises 284 residues: Tropomyosin alpha-1 chain (284 aa).

The disordered stretch occupies residues 1 to 38 (MDAIKKKMQMLKLDKENALDRAEQAEADKKGAEDKSKQ). Residues 1 to 284 (MDAIKKKMQM…DHALNDMTSI (284 aa)) are a coiled coil. Basic and acidic residues predominate over residues 12–38 (KLDKENALDRAEQAEADKKGAEDKSKQ).

This sequence belongs to the tropomyosin family. In terms of assembly, homodimer. Heterodimer of an alpha (TPM1, TPM3 or TPM4) and a beta (TPM2) chain.

Its subcellular location is the cytoplasm. It localises to the cytoskeleton. Functionally, binds to actin filaments in muscle and non-muscle cells. Plays a central role, in association with the troponin complex, in the calcium dependent regulation of vertebrate striated muscle contraction. Smooth muscle contraction is regulated by interaction with caldesmon. In non-muscle cells is implicated in stabilizing cytoskeleton actin filaments. The sequence is that of Tropomyosin alpha-1 chain (tpm1) from Xenopus laevis (African clawed frog).